We begin with the raw amino-acid sequence, 94 residues long: Large ribosomal subunit protein uL23 (94 aa).

Belongs to the universal ribosomal protein uL23 family. As to quaternary structure, part of the 50S ribosomal subunit. Contacts protein L29, and trigger factor when it is bound to the ribosome.

In terms of biological role, one of the early assembly proteins it binds 23S rRNA. One of the proteins that surrounds the polypeptide exit tunnel on the outside of the ribosome. Forms the main docking site for trigger factor binding to the ribosome. The chain is Large ribosomal subunit protein uL23 from Treponema pallidum (strain Nichols).